The chain runs to 522 residues: Thiamine biosynthetic bifunctional enzyme TH1, chloroplastic (522 aa).

Residues 1–36 (MNSLGGIRSWPANWRSTTASMTTTESVRKVPQVLTV) constitute a chloroplast transit peptide. 4-amino-2-methyl-5-(diphosphooxymethyl)pyrimidine contacts are provided by residues 345–349 (QLREK) and N377. Mg(2+)-binding residues include D378 and D397. S416 contributes to the 4-amino-2-methyl-5-(diphosphooxymethyl)pyrimidine binding site. A 2-[(2R,5Z)-2-carboxy-4-methylthiazol-5(2H)-ylidene]ethyl phosphate-binding site is contributed by 442 to 444 (TNT). K445 contacts 4-amino-2-methyl-5-(diphosphooxymethyl)pyrimidine. 2-[(2R,5Z)-2-carboxy-4-methylthiazol-5(2H)-ylidene]ethyl phosphate contacts are provided by residues G472 and 495 to 496 (VS).

The protein belongs to the thiamine-phosphate synthase family. Mg(2+) is required as a cofactor.

It is found in the plastid. Its subcellular location is the chloroplast. It carries out the reaction 2-[(2R,5Z)-2-carboxy-4-methylthiazol-5(2H)-ylidene]ethyl phosphate + 4-amino-2-methyl-5-(diphosphooxymethyl)pyrimidine + 2 H(+) = thiamine phosphate + CO2 + diphosphate. It catalyses the reaction 2-(2-carboxy-4-methylthiazol-5-yl)ethyl phosphate + 4-amino-2-methyl-5-(diphosphooxymethyl)pyrimidine + 2 H(+) = thiamine phosphate + CO2 + diphosphate. The catalysed reaction is 4-methyl-5-(2-phosphooxyethyl)-thiazole + 4-amino-2-methyl-5-(diphosphooxymethyl)pyrimidine + H(+) = thiamine phosphate + diphosphate. The enzyme catalyses 4-amino-5-hydroxymethyl-2-methylpyrimidine + ATP = 4-amino-2-methyl-5-(phosphooxymethyl)pyrimidine + ADP + H(+). It participates in cofactor biosynthesis; thiamine diphosphate biosynthesis; thiamine phosphate from 4-amino-2-methyl-5-diphosphomethylpyrimidine and 4-methyl-5-(2-phosphoethyl)-thiazole: step 1/1. It functions in the pathway cofactor biosynthesis; thiamine diphosphate biosynthesis; 4-amino-2-methyl-5-diphosphomethylpyrimidine from 5-amino-1-(5-phospho-D-ribosyl)imidazole: step 2/3. Functionally, essential for thiamine biosynthesis. Bifunctional enzyme that catalyzes the phosphorylation of hydroxymethylpyrimidine phosphate (HMP-P) to HMP-PP and condenses 4-methyl-5-(beta-hydroxyethyl)thiazole monophosphate (THZ-P) and 2-methyl-4-amino-5-hydroxymethyl pyrimidine pyrophosphate (HMP-PP) to form thiamine monophosphate (TMP). This Arabidopsis thaliana (Mouse-ear cress) protein is Thiamine biosynthetic bifunctional enzyme TH1, chloroplastic (TH1).